The primary structure comprises 169 residues: Vimentin-type intermediate filament-associated coiled-coil protein (169 aa).

Residues 7–89 adopt a coiled-coil conformation; sequence LQIREANAHL…VHSLQATVHQ (83 aa). Low complexity predominate over residues 126–135; that stretch reads RLGPLPASDP. A disordered region spans residues 126-169; it reads RLGPLPASDPGHPPPGGPGPPLDNSTGEEADRDHLQPAVFGTTV. Residues 136–146 are compositionally biased toward pro residues; it reads GHPPPGGPGPP.

Its subcellular location is the cytoplasm. This is Vimentin-type intermediate filament-associated coiled-coil protein (VMAC) from Homo sapiens (Human).